The chain runs to 172 residues: Large ribosomal subunit protein eL20A (172 aa).

Phosphoserine is present on serine 32. Residues lysine 125, lysine 131, and lysine 149 each participate in a glycyl lysine isopeptide (Lys-Gly) (interchain with G-Cter in ubiquitin) cross-link.

Belongs to the eukaryotic ribosomal protein eL20 family. As to quaternary structure, component of the large ribosomal subunit (LSU). Mature yeast ribosomes consist of a small (40S) and a large (60S) subunit. The 40S small subunit contains 1 molecule of ribosomal RNA (18S rRNA) and 33 different proteins (encoded by 57 genes). The large 60S subunit contains 3 rRNA molecules (25S, 5.8S and 5S rRNA) and 46 different proteins (encoded by 81 genes). eL20 forms multiple interactions with RNA and proteins in the central protuberance, connecting components of core functional centers that are located far apart.

It is found in the cytoplasm. Component of the ribosome, a large ribonucleoprotein complex responsible for the synthesis of proteins in the cell. The small ribosomal subunit (SSU) binds messenger RNAs (mRNAs) and translates the encoded message by selecting cognate aminoacyl-transfer RNA (tRNA) molecules. The large subunit (LSU) contains the ribosomal catalytic site termed the peptidyl transferase center (PTC), which catalyzes the formation of peptide bonds, thereby polymerizing the amino acids delivered by tRNAs into a polypeptide chain. The nascent polypeptides leave the ribosome through a tunnel in the LSU and interact with protein factors that function in enzymatic processing, targeting, and the membrane insertion of nascent chains at the exit of the ribosomal tunnel. The sequence is that of Large ribosomal subunit protein eL20A from Saccharomyces cerevisiae (strain ATCC 204508 / S288c) (Baker's yeast).